A 773-amino-acid chain; its full sequence is 4'-phosphopantetheine phosphatase (773 aa).

Ala-2 carries the N-acetylalanine modification. Residues 2 to 402 (AECGASGSGS…SPELGPAQRA (401 aa)) form a pantothenate kinase region. Ser-196 and Ser-199 together coordinate acetyl-CoA. Residue Tyr-320 is modified to 3'-nitrotyrosine. Ser-393 and Ser-404 each carry phosphoserine. Residues 403–773 (RSGTFDLLEM…VIFKYEVPAE (371 aa)) form a 4'-phosphopantetheine phosphatase region. At Thr-406 the chain carries Phosphothreonine. Asp-623, Asn-624, and Asp-659 together coordinate Mn(2+). The short motif at 724–728 (EGMGR) is the Subfamily II EGMGR motif element.

This sequence in the N-terminal section; belongs to the type II pantothenate kinase family. The protein in the C-terminal section; belongs to the damage-control phosphatase family. Phosphopantetheine phosphatase II subfamily. As to quaternary structure, homodimer. Interacts with PKM. It depends on Mn(2+) as a cofactor. Ni(2+) is required as a cofactor. Widely expressed with high expression in the muscle. Expressed in the retina and lens epithelium, mainly in ganglion cell layer, outer plexiform layer and retinal pigment layer (at protein level).

The protein resides in the cytoplasm. It catalyses the reaction (R)-4'-phosphopantetheine + H2O = (R)-pantetheine + phosphate. The enzyme catalyses (R)-4'-phosphopantetheine sulfonate + H2O = (R)-pantetheine sulfonate + phosphate. The catalysed reaction is (R)-4'-phospho-S-sulfopantetheine + H2O = (R)-S-sulfopantetheine + phosphate. Activity is strongly promoted by Co(2+), Ni(2+), Mg(2+) and Mn(2+). Activity is inhibited by EDTA. In terms of biological role, phosphatase which shows a preference for 4'-phosphopantetheine and its oxidatively damaged forms (sulfonate or S-sulfonate), providing strong indirect evidence that the phosphatase activity pre-empts damage in the coenzyme A (CoA) pathway. Hydrolyzing excess 4'-phosphopantetheine could constitute a directed overflow mechanism to prevent its oxidation to the S-sulfonate, sulfonate, or other forms. Hydrolyzing 4'-phosphopantetheine sulfonate or S-sulfonate would forestall their conversion to inactive forms of CoA and acyl carrier protein. May play a role in the physiological regulation of CoA intracellular levels. In Homo sapiens (Human), this protein is 4'-phosphopantetheine phosphatase.